The primary structure comprises 177 residues: Protein SPMIP1 (177 aa).

Residues 47 to 80 (SRLPRKLPTLLPQASVAPPPPASKTTPSKAPSPA) form a disordered region.

This chain is Protein SPMIP1 (Spmip1), found in Mus musculus (Mouse).